Consider the following 763-residue polypeptide: MAP7 domain-containing protein 2 (763 aa).

Positions 1–11 are enriched in gly residues; it reads MERGGGGGFGT. Disordered regions lie at residues 1–63, 96–124, 149–268, and 300–540; these read MERG…KERR, WRKL…LREE, SWGA…DVGK, and PLRR…KQKE. Positions 52–63 are enriched in basic and acidic residues; the sequence is SGERQRLAKERR. The stretch at 54–147 forms a coiled coil; the sequence is ERQRLAKERR…RTQQLELKKK (94 aa). The segment covering 192–206 has biased composition (polar residues); sequence ESTNACDKLSTSTMS. Basic and acidic residues-rich tracts occupy residues 355–371, 385–400, and 430–540; these read MPKR…EREG, ALEK…EKHA, and LAEK…KQKE.

The protein belongs to the MAP7 family. As to quaternary structure, interacts (via N-terminus) with microtubules; facilitates microtubule stabilization. Interacts with kinesin-1 family members, KIF5A, KIF5B and KIF5C.

The protein resides in the cytoplasm. The protein localises to the cytoskeleton. Its subcellular location is the microtubule organizing center. It is found in the centrosome. It localises to the midbody. The protein resides in the cell projection. The protein localises to the neuron projection. Its subcellular location is the axon. Its function is as follows. Microtubule-stabilizing protein involved in the control of cell motility and neurite outgrowth. Acts as a critical cofactor for kinesin transport; in the proximal axon regulates kinesin-1 family members, KIF5A, KIF5B and KIF5C recruitment to microtubules and contributes to kinesin-1-mediated transport in the axons. The sequence is that of MAP7 domain-containing protein 2 (MAP7D2) from Pongo abelii (Sumatran orangutan).